Here is a 260-residue protein sequence, read N- to C-terminus: Carbonic anhydrase 3 (260 aa).

Alanine 2 bears the N-acetylalanine mark. The Alpha-carbonic anhydrase domain maps to 3–259 (KEWGYASHNG…INNRVVRASF (257 aa)). 5 positions are modified to phosphoserine: serine 29, serine 43, serine 48, serine 50, and serine 55. Residues 64-67 (KTCR) form an involved in proton transfer region. Residue threonine 73 is modified to Phosphothreonine. The Zn(2+) site is built by histidine 94, histidine 96, and histidine 119. Residue tyrosine 127 is modified to Phosphotyrosine. Threonine 129 and threonine 176 each carry phosphothreonine. 2 positions are modified to S-glutathionyl cysteine: cysteine 182 and cysteine 187. 198–199 (TT) provides a ligand contact to substrate. Threonine 216 carries the post-translational modification Phosphothreonine. Residue serine 219 is modified to Phosphoserine.

The protein belongs to the alpha-carbonic anhydrase family. Zn(2+) is required as a cofactor. Post-translationally, S-thiolated both by thiol-disulfide exchange with glutathione disulfide and by oxyradical-initiated S-thiolation with reduced glutathione. S-glutathionylated in hepatocytes under oxidative stress. As to expression, muscle specific.

Its subcellular location is the cytoplasm. The enzyme catalyses hydrogencarbonate + H(+) = CO2 + H2O. Activated by proton donors such as imidazole and the dipeptide histidylhistidine. Inhibited by coumarins and sulfonamide derivatives such as acetazolamide. Its function is as follows. Reversible hydration of carbon dioxide. In Homo sapiens (Human), this protein is Carbonic anhydrase 3.